The chain runs to 89 residues: Small ribosomal subunit protein uS15 (89 aa).

This sequence belongs to the universal ribosomal protein uS15 family. As to quaternary structure, part of the 30S ribosomal subunit. Forms a bridge to the 50S subunit in the 70S ribosome, contacting the 23S rRNA.

In terms of biological role, one of the primary rRNA binding proteins, it binds directly to 16S rRNA where it helps nucleate assembly of the platform of the 30S subunit by binding and bridging several RNA helices of the 16S rRNA. Its function is as follows. Forms an intersubunit bridge (bridge B4) with the 23S rRNA of the 50S subunit in the ribosome. The sequence is that of Small ribosomal subunit protein uS15 from Colwellia psychrerythraea (strain 34H / ATCC BAA-681) (Vibrio psychroerythus).